A 55-amino-acid chain; its full sequence is Sec-independent protein translocase protein TatA (55 aa).

Residues 1-21 form a helical membrane-spanning segment; the sequence is MFGELGVPEVLFILGIALLIF.

This sequence belongs to the TatA/E family. Forms a complex with TatC.

Its subcellular location is the cell inner membrane. Functionally, part of the twin-arginine translocation (Tat) system that transports large folded proteins containing a characteristic twin-arginine motif in their signal peptide across membranes. TatA could form the protein-conducting channel of the Tat system. The protein is Sec-independent protein translocase protein TatA of Koribacter versatilis (strain Ellin345).